The chain runs to 55 residues: Cicadin (55 aa).

The segment covering 1–26 (NEYHGFVDKANNENKRKKQQGRDDFV) has biased composition (basic and acidic residues). The disordered stretch occupies residues 1 to 39 (NEYHGFVDKANNENKRKKQQGRDDFVVKPNNFANRRRKD).

In terms of biological role, possesses antifungal activity against B.cinerea, M.arachidicola, F.oxysporum, R.solani and C.comatus. Its function is as follows. Suppresses the activity of HIV-1 reverse transcriptase and stimulates the proliferation of murine splenocytes. This Cicada flammata protein is Cicadin.